We begin with the raw amino-acid sequence, 109 residues long: RNA-binding protein Hfq (109 aa).

The 60-residue stretch at 9-68 (DPFLNALRKEKVSVSVYLVNGIKLQGQVEAFDQFCIVLRNTVNQMVYKHAISTIVPAKSV) folds into the Sm domain. The disordered stretch occupies residues 77–109 (PYHQNSNDEQDENVDDIHSDDLEIQENEGNIHE).

The protein belongs to the Hfq family. As to quaternary structure, homohexamer.

Functionally, RNA chaperone that binds small regulatory RNA (sRNAs) and mRNAs to facilitate mRNA translational regulation in response to envelope stress, environmental stress and changes in metabolite concentrations. Also binds with high specificity to tRNAs. In Francisella tularensis subsp. holarctica (strain FTNF002-00 / FTA), this protein is RNA-binding protein Hfq.